The sequence spans 113 residues: Iron-sulfur cluster insertion protein ErpA (113 aa).

The iron-sulfur cluster site is built by C41, C105, and C107.

This sequence belongs to the HesB/IscA family. Homodimer. The cofactor is iron-sulfur cluster.

Its function is as follows. Required for insertion of 4Fe-4S clusters for at least IspG. The protein is Iron-sulfur cluster insertion protein ErpA of Hydrogenovibrio crunogenus (strain DSM 25203 / XCL-2) (Thiomicrospira crunogena).